A 347-amino-acid polypeptide reads, in one-letter code: NADH-ubiquinone oxidoreductase chain 2 (347 aa).

A run of 11 helical transmembrane segments spans residues 3–23 (PMTSTILLMTIMSGTSIVLMS), 25–45 (HWFMTWLGFEMNMMAIIPILM), 59–79 (YFLTQATASMILVLAIIINLM), 96–116 (TLITIALVMKLGLAPFHFWVP), 122–142 (VSLSSGLILLTWQKIAPLSLL), 149–169 (INTNLLLTMSLLSIMIGGWGG), 178–198 (IMAYSSIAHMGWMIVIMIYNP), 200–220 (LSLLNLFIYIMMTSSMFMLLI), 240–260 (ITTMMMATLLSLGGLPPLTGF), 274–294 (NSVILPTLMAILALLNLFFYM), and 326–346 (MTMLISISTLALPLTPLFISL).

It belongs to the complex I subunit 2 family. As to quaternary structure, core subunit of respiratory chain NADH dehydrogenase (Complex I) which is composed of 45 different subunits. Interacts with TMEM242.

The protein resides in the mitochondrion inner membrane. The enzyme catalyses a ubiquinone + NADH + 5 H(+)(in) = a ubiquinol + NAD(+) + 4 H(+)(out). Its function is as follows. Core subunit of the mitochondrial membrane respiratory chain NADH dehydrogenase (Complex I) which catalyzes electron transfer from NADH through the respiratory chain, using ubiquinone as an electron acceptor. Essential for the catalytic activity and assembly of complex I. This Sylvisorex granti (Grant's forest shrew) protein is NADH-ubiquinone oxidoreductase chain 2.